We begin with the raw amino-acid sequence, 377 residues long: Nitric oxide reductase FlRd-NAD(+) reductase (377 aa).

Belongs to the FAD-dependent oxidoreductase family. FAD serves as cofactor.

The protein resides in the cytoplasm. The catalysed reaction is 2 reduced [nitric oxide reductase rubredoxin domain] + NAD(+) + H(+) = 2 oxidized [nitric oxide reductase rubredoxin domain] + NADH. It participates in nitrogen metabolism; nitric oxide reduction. In terms of biological role, one of at least two accessory proteins for anaerobic nitric oxide (NO) reductase. Reduces the rubredoxin moiety of NO reductase. This is Nitric oxide reductase FlRd-NAD(+) reductase from Salmonella newport (strain SL254).